The following is a 201-amino-acid chain: Small ribosomal subunit protein uS4c (201 aa).

The 69-residue stretch at 89–157 folds into the S4 RNA-binding domain; that stretch reads MRLDNILFRL…VQNYIASSDP (69 aa).

The protein belongs to the universal ribosomal protein uS4 family. Part of the 30S ribosomal subunit. Contacts protein S5. The interaction surface between S4 and S5 is involved in control of translational fidelity.

It is found in the plastid. Its subcellular location is the chloroplast. Its function is as follows. One of the primary rRNA binding proteins, it binds directly to 16S rRNA where it nucleates assembly of the body of the 30S subunit. In terms of biological role, with S5 and S12 plays an important role in translational accuracy. The protein is Small ribosomal subunit protein uS4c (rps4) of Triticum aestivum (Wheat).